The primary structure comprises 166 residues: 6,7-dimethyl-8-ribityllumazine synthase (166 aa).

Residues phenylalanine 24, 58-60 (ALE), and 82-84 (AVI) each bind 5-amino-6-(D-ribitylamino)uracil. Residue 87 to 88 (ET) coordinates (2S)-2-hydroxy-3-oxobutyl phosphate. Histidine 90 serves as the catalytic Proton donor. 5-amino-6-(D-ribitylamino)uracil is bound at residue asparagine 115. Arginine 129 is a binding site for (2S)-2-hydroxy-3-oxobutyl phosphate.

It belongs to the DMRL synthase family.

It catalyses the reaction (2S)-2-hydroxy-3-oxobutyl phosphate + 5-amino-6-(D-ribitylamino)uracil = 6,7-dimethyl-8-(1-D-ribityl)lumazine + phosphate + 2 H2O + H(+). Its pathway is cofactor biosynthesis; riboflavin biosynthesis; riboflavin from 2-hydroxy-3-oxobutyl phosphate and 5-amino-6-(D-ribitylamino)uracil: step 1/2. In terms of biological role, catalyzes the formation of 6,7-dimethyl-8-ribityllumazine by condensation of 5-amino-6-(D-ribitylamino)uracil with 3,4-dihydroxy-2-butanone 4-phosphate. This is the penultimate step in the biosynthesis of riboflavin. The sequence is that of 6,7-dimethyl-8-ribityllumazine synthase from Ralstonia pickettii (strain 12J).